Consider the following 492-residue polypeptide: Ketol-acid reductoisomerase (NADP(+)) (492 aa).

One can recognise a KARI N-terminal Rossmann domain in the interval 14 to 208 (LDQLGKCRFM…GGHRAGVLQS (195 aa)). NADP(+) is bound by residues 45–48 (CGAQ), R68, R76, S78, and 108–110 (DKQ). The active site involves H132. Position 158 (G158) interacts with NADP(+). 2 consecutive KARI C-terminal knotted domains span residues 209–344 (SFVA…NAPQ) and 345–485 (FDGK…MKDM). Mg(2+) contacts are provided by D217, E221, E389, and E393. S414 provides a ligand contact to substrate.

The protein belongs to the ketol-acid reductoisomerase family. Requires Mg(2+) as cofactor.

It carries out the reaction (2R)-2,3-dihydroxy-3-methylbutanoate + NADP(+) = (2S)-2-acetolactate + NADPH + H(+). It catalyses the reaction (2R,3R)-2,3-dihydroxy-3-methylpentanoate + NADP(+) = (S)-2-ethyl-2-hydroxy-3-oxobutanoate + NADPH + H(+). Its pathway is amino-acid biosynthesis; L-isoleucine biosynthesis; L-isoleucine from 2-oxobutanoate: step 2/4. The protein operates within amino-acid biosynthesis; L-valine biosynthesis; L-valine from pyruvate: step 2/4. In terms of biological role, involved in the biosynthesis of branched-chain amino acids (BCAA). Catalyzes an alkyl-migration followed by a ketol-acid reduction of (S)-2-acetolactate (S2AL) to yield (R)-2,3-dihydroxy-isovalerate. In the isomerase reaction, S2AL is rearranged via a Mg-dependent methyl migration to produce 3-hydroxy-3-methyl-2-ketobutyrate (HMKB). In the reductase reaction, this 2-ketoacid undergoes a metal-dependent reduction by NADPH to yield (R)-2,3-dihydroxy-isovalerate. This is Ketol-acid reductoisomerase (NADP(+)) from Pectobacterium atrosepticum (strain SCRI 1043 / ATCC BAA-672) (Erwinia carotovora subsp. atroseptica).